The following is a 107-amino-acid chain: uncharacterized protein (107 aa).

Residues 80 to 98 are compositionally biased toward polar residues; it reads SIDNLKPTSHQNGTTNDTA. The disordered stretch occupies residues 80-107; that stretch reads SIDNLKPTSHQNGTTNDTATMDHLEKNE.

This is an uncharacterized protein from Human spumaretrovirus (SFVcpz(hu)).